Consider the following 427-residue polypeptide: Extracellular superoxide dismutase [Cu-Zn] 2 (427 aa).

A signal peptide spans 1-20; the sequence is MNKLIISLLIVLSAISIISA. The Extracellular portion of the chain corresponds to 21–406; sequence DYQYGYCKFG…PTETSQPGTS (386 aa). Asparagine 38, asparagine 57, asparagine 81, asparagine 190, and asparagine 218 each carry an N-linked (GlcNAc...) asparagine glycan. 3 residues coordinate Cu cation: histidine 257, histidine 259, and histidine 275. Residues histidine 275 and histidine 283 each coordinate Zn(2+). N-linked (GlcNAc...) asparagine glycosylation is present at asparagine 288. The Zn(2+) site is built by histidine 292 and aspartate 295. Histidine 331 lines the Cu cation pocket. N-linked (GlcNAc...) asparagine glycosylation occurs at asparagine 376. The disordered stretch occupies residues 381 to 404; the sequence is GESTIEPSPTPSTTPTPTETSQPG. A compositionally biased stretch (low complexity) spans 395 to 404; sequence PTPTETSQPG. A helical membrane pass occupies residues 407–426; that stretch reads SYLAPFFVLILSSLISVILI. Leucine 427 is a topological domain (cytoplasmic).

The protein belongs to the Cu-Zn superoxide dismutase family. Cu cation serves as cofactor. The cofactor is Zn(2+).

The protein localises to the cell membrane. The catalysed reaction is 2 superoxide + 2 H(+) = H2O2 + O2. Functionally, protect the extracellular space from toxic effect of reactive oxygen intermediates by converting superoxyde radicals into hydrogen peroxyde and oxygen. The polypeptide is Extracellular superoxide dismutase [Cu-Zn] 2 (sodB) (Dictyostelium discoideum (Social amoeba)).